The primary structure comprises 550 residues: Hydroxylamine reductase (550 aa).

[2Fe-2S] cluster contacts are provided by Cys-3, Cys-6, Cys-18, and Cys-25. Residues His-249, Glu-273, Cys-317, Cys-405, Cys-433, Cys-458, Glu-492, and Lys-494 each contribute to the hybrid [4Fe-2O-2S] cluster site. Cys-405 carries the cysteine persulfide modification.

This sequence belongs to the HCP family. The cofactor is [2Fe-2S] cluster. Hybrid [4Fe-2O-2S] cluster is required as a cofactor.

Its subcellular location is the cytoplasm. It catalyses the reaction A + NH4(+) + H2O = hydroxylamine + AH2 + H(+). Functionally, catalyzes the reduction of hydroxylamine to form NH(3) and H(2)O. The chain is Hydroxylamine reductase from Salmonella paratyphi A (strain ATCC 9150 / SARB42).